The sequence spans 1086 residues: NAD(P) transhydrogenase, mitochondrial (1086 aa).

The transit peptide at 1-43 (MANLLKTVVTGCSCPLLSNLGSCKGLRVKKDFLRTFYTHQELW) directs the protein to the mitochondrion. The Mitochondrial matrix portion of the chain corresponds to 44 to 474 (CKAPVKPGIP…TITPFRKTMS (431 aa)). An N6-acetyllysine modification is found at lysine 70. Lysine 117 carries the N6-succinyllysine modification. 182-184 (RVT) is an NAD(+) binding site. Lysine 224 carries the post-translational modification N6-succinyllysine. Residues valine 237, 257-259 (DTR), and glycine 287 each bind NAD(+). N6-succinyllysine is present on lysine 294. NAD(+)-binding residues include glutamate 300 and leucine 319. Lysine 331 carries the N6-succinyllysine modification. Position 397 is an N6-acetyllysine (lysine 397). 4 helical membrane passes run 475-493 (TASA…GIAA), 501-521 (MVTT…GVTP), 527-546 (LMSV…LALM), and 558-578 (GLAA…FLVT). The Mitochondrial matrix portion of the chain corresponds to 579–595 (QRMLDMFKRPTDPPEYN). The next 5 helical transmembrane spans lie at 596-616 (YLYL…LYSG), 622-642 (IMYL…STQG), 646-666 (LGNA…LGVL), 672-691 (LLAQ…LTIA), and 702-722 (LVAA…IAEY). The Cytoplasmic portion of the chain corresponds to 723–739 (IIEYPHFATDAAANLTK). Transmembrane regions (helical) follow at residues 740-760 (IVAY…LIAY), 778-797 (HLLN…PFMV), 801-819 (FTTG…AVMG), 833-853 (VVIT…GFLL), and 857-879 (LLTI…MCVA). At 880–1086 (MNRSLANVIL…QAKVRESYQK (207 aa)) the chain is on the mitochondrial matrix side. Residues tyrosine 933, 965–970 (VAGRMP), 1007–1011 (GANDT), 1026–1027 (GM), 1042–1049 (KRSLGVGY), and 1068–1069 (DA) contribute to the NADP(+) site. Lysine 1079 is modified (N6-succinyllysine).

The protein in the N-terminal section; belongs to the AlaDH/PNT family. It in the C-terminal section; belongs to the PNT beta subunit family. Homodimer. Widely expressed with expression most readily detectable in adrenal, heart, kidney, thyroid and adipose tissues.

The protein resides in the mitochondrion inner membrane. It catalyses the reaction NAD(+) + NADPH + H(+)(in) = NADH + NADP(+) + H(+)(out). In terms of biological role, the transhydrogenation between NADH and NADP is coupled to respiration and ATP hydrolysis and functions as a proton pump across the membrane. May play a role in reactive oxygen species (ROS) detoxification in the adrenal gland. The sequence is that of NAD(P) transhydrogenase, mitochondrial (NNT) from Homo sapiens (Human).